A 568-amino-acid polypeptide reads, in one-letter code: Oxygen-dependent choline dehydrogenase (568 aa).

FAD is bound at residue 6-35 (DYIIVGAGSAGCVLADRLSASGEHYILLLE). His-470 (proton acceptor) is an active-site residue.

The protein belongs to the GMC oxidoreductase family. FAD is required as a cofactor.

The enzyme catalyses choline + A = betaine aldehyde + AH2. The catalysed reaction is betaine aldehyde + NAD(+) + H2O = glycine betaine + NADH + 2 H(+). It participates in amine and polyamine biosynthesis; betaine biosynthesis via choline pathway; betaine aldehyde from choline (cytochrome c reductase route): step 1/1. In terms of biological role, involved in the biosynthesis of the osmoprotectant glycine betaine. Catalyzes the oxidation of choline to betaine aldehyde and betaine aldehyde to glycine betaine at the same rate. In Photobacterium profundum (strain SS9), this protein is Oxygen-dependent choline dehydrogenase.